A 412-amino-acid chain; its full sequence is B3 domain-containing protein Os02g0683500 (412 aa).

The segment at 1 to 87 (MEFTTSSRFS…GGGGGGGGEA (87 aa)) is disordered. Residues 30-65 (TATAEAAPAPTSSSSSPAHHAASASASASASGSSTP) show a composition bias toward low complexity. Residues 73–86 (GASGSGGGGGGGGE) show a composition bias toward gly residues. Residues 96-200 (FDKVVTPSDV…RHRLFIDWKR (105 aa)) constitute a DNA-binding region (TF-B3). The tract at residues 374-412 (RLLELPPHHHHGAESSAASSPSSSSSSKRDAHSALDLDL) is disordered. Over residues 387–399 (ESSAASSPSSSSS) the composition is skewed to low complexity. Over residues 400–412 (SKRDAHSALDLDL) the composition is skewed to basic and acidic residues.

It is found in the nucleus. This chain is B3 domain-containing protein Os02g0683500, found in Oryza sativa subsp. japonica (Rice).